The chain runs to 1014 residues: Regulator of telomere elongation helicase 1 homolog (1014 aa).

The 302-residue stretch at 7–308 folds into the Helicase ATP-binding domain; it reads RGVDVDFPYD…NSADKQFDPE (302 aa). An ATP-binding site is contributed by 42–49; that stretch reads SPTGTGKT. Residues 70–85 are compositionally biased toward gly residues; sequence GGGGGGGGGGGGGGGS. A disordered region spans residues 70–106; it reads GGGGGGGGGGGGGGGSQQPPYGSQPSGSQHSGGSASQ. A compositionally biased stretch (low complexity) spans 86-106; that stretch reads QQPPYGSQPSGSQHSGGSASQ. Residues Cys149, Cys170, Cys175, and Cys211 each coordinate [4Fe-4S] cluster. A DEAH box motif is present at residues 255 to 258; the sequence is DEAH. Residues 906–930 form a disordered region; sequence SSKKSNITHAPGNSGAIHEKSGGQE.

The protein belongs to the helicase family. RAD3/XPD subfamily.

The protein localises to the nucleus. The catalysed reaction is ATP + H2O = ADP + phosphate + H(+). A probable ATP-dependent DNA helicase implicated in DNA replication, DNA repair and the maintenance of genomic stability. Acts as an anti-recombinase to counteract toxic recombination and limit crossover during meiosis. Regulates meiotic recombination and crossover homeostasis by physically dissociating strand invasion events and thereby promotes noncrossover repair by meiotic synthesis dependent strand annealing (SDSA) as well as disassembly of D loop recombination intermediates. The polypeptide is Regulator of telomere elongation helicase 1 homolog (Oryza sativa subsp. japonica (Rice)).